Consider the following 96-residue polypeptide: Putative pterin-4-alpha-carbinolamine dehydratase (96 aa).

Belongs to the pterin-4-alpha-carbinolamine dehydratase family.

The catalysed reaction is (4aS,6R)-4a-hydroxy-L-erythro-5,6,7,8-tetrahydrobiopterin = (6R)-L-erythro-6,7-dihydrobiopterin + H2O. This chain is Putative pterin-4-alpha-carbinolamine dehydratase, found in Prochlorococcus marinus (strain MIT 9215).